The primary structure comprises 1036 residues: PDZ domain-containing RING finger protein 4 (1036 aa).

An RING-type; degenerate zinc finger spans residues 18-56 (CKLCGQVLEEPLCTPCGHVFCASCLLPWAVRRRRCPLQC). Over residues 129–160 (ARGGCGPTPRAGRGGGARGGPPGGRWGRGRGP) the composition is skewed to gly residues. The tract at residues 129-161 (ARGGCGPTPRAGRGGGARGGPPGGRWGRGRGPG) is disordered. PDZ domains are found at residues 224-314 (TIVL…LRRT) and 402-486 (EVEL…VARP). A disordered region spans residues 515–590 (HNEAMQPTAN…SLKSKRDLGQ (76 aa)). The span at 548–566 (NHEKDSGVGRTDESLRNDE) shows a compositional bias: basic and acidic residues. Positions 655–689 (NQGEQEGVEHELQLLNEELRNIELECQNIMQAHRL) form a coiled coil. Residues 726–735 (EHPEKSDKDS) are compositionally biased toward basic and acidic residues. The segment at 726-819 (EHPEKSDKDS…VLEGSKLPDQ (94 aa)) is disordered. Polar residues predominate over residues 736 to 750 (SSAYNTAESCRSTPL). The segment covering 774-799 (STMAATQSSSGQSSKESTSTKAKTTE) has biased composition (low complexity). Positions 805-819 (ESKEKVLEGSKLPDQ) are enriched in basic and acidic residues.

This Homo sapiens (Human) protein is PDZ domain-containing RING finger protein 4 (PDZRN4).